Reading from the N-terminus, the 260-residue chain is Phytolongin Phyl2.1 (260 aa).

Residues 12–114 enclose the Longin domain; it reads CIAKGTVILA…LDNPTQHCLQ (103 aa). Residues 231-251 form a helical; Anchor for type IV membrane protein membrane-spanning segment; it reads WIVLMFDLCICLVLFGIWLWI.

Belongs to the synaptobrevin family.

Its subcellular location is the membrane. Functionally, non-SNARE longin protein involved in membrane-trafficking machinery. The sequence is that of Phytolongin Phyl2.1 from Arabidopsis thaliana (Mouse-ear cress).